The sequence spans 318 residues: Homoserine O-succinyltransferase (318 aa).

The active-site Acyl-thioester intermediate is the cysteine 142. Substrate contacts are provided by lysine 163 and serine 192. The active-site Proton acceptor is histidine 235. Glutamate 237 is a catalytic residue. Arginine 249 is a substrate binding site.

It belongs to the MetA family.

Its subcellular location is the cytoplasm. It catalyses the reaction L-homoserine + succinyl-CoA = O-succinyl-L-homoserine + CoA. The protein operates within amino-acid biosynthesis; L-methionine biosynthesis via de novo pathway; O-succinyl-L-homoserine from L-homoserine: step 1/1. Transfers a succinyl group from succinyl-CoA to L-homoserine, forming succinyl-L-homoserine. This is Homoserine O-succinyltransferase from Shewanella putrefaciens (strain CN-32 / ATCC BAA-453).